Consider the following 433-residue polypeptide: Dihydrolipoyllysine-residue acetyltransferase component of pyruvate dehydrogenase complex (433 aa).

The region spanning 2–77 (AFEFRLPDIG…VVGDVIVKID (76 aa)) is the Lipoyl-binding domain. Lys-43 carries the post-translational modification N6-lipoyllysine. Disordered stretches follow at residues 80–134 (DAEE…PSVR) and 164–204 (YLNG…FPET). Composition is skewed to basic and acidic residues over residues 84–103 (MQFK…KEQE) and 117–126 (EKTEVDESKT). A Peripheral subunit-binding (PSBD) domain is found at 128–165 (KAMPSVRKYARENGVNIKAVNGSGKNGRITKEDIDAYL). Low complexity predominate over residues 166 to 185 (NGGSSEEGSNTSAASESTSS). His-404 is an active-site residue.

This sequence belongs to the 2-oxoacid dehydrogenase family. In terms of assembly, forms a 24-polypeptide structural core with octahedral symmetry. Requires (R)-lipoate as cofactor.

It catalyses the reaction N(6)-[(R)-dihydrolipoyl]-L-lysyl-[protein] + acetyl-CoA = N(6)-[(R)-S(8)-acetyldihydrolipoyl]-L-lysyl-[protein] + CoA. Functionally, the pyruvate dehydrogenase complex catalyzes the overall conversion of pyruvate to acetyl-CoA and CO(2). It contains multiple copies of three enzymatic components: pyruvate dehydrogenase (E1), dihydrolipoamide acetyltransferase (E2) and lipoamide dehydrogenase (E3). In Staphylococcus epidermidis (strain ATCC 35984 / DSM 28319 / BCRC 17069 / CCUG 31568 / BM 3577 / RP62A), this protein is Dihydrolipoyllysine-residue acetyltransferase component of pyruvate dehydrogenase complex (pdhC).